Here is a 168-residue protein sequence, read N- to C-terminus: ATP synthase subunit b (168 aa).

The helical transmembrane segment at 10-30 threads the bilayer; it reads STILGNFILVTASFAVLIILI.

This sequence belongs to the ATPase B chain family. In terms of assembly, F-type ATPases have 2 components, F(1) - the catalytic core - and F(0) - the membrane proton channel. F(1) has five subunits: alpha(3), beta(3), gamma(1), delta(1), epsilon(1). F(0) has three main subunits: a(1), b(2) and c(10-14). The alpha and beta chains form an alternating ring which encloses part of the gamma chain. F(1) is attached to F(0) by a central stalk formed by the gamma and epsilon chains, while a peripheral stalk is formed by the delta and b chains.

It localises to the cell membrane. Functionally, f(1)F(0) ATP synthase produces ATP from ADP in the presence of a proton or sodium gradient. F-type ATPases consist of two structural domains, F(1) containing the extramembraneous catalytic core and F(0) containing the membrane proton channel, linked together by a central stalk and a peripheral stalk. During catalysis, ATP synthesis in the catalytic domain of F(1) is coupled via a rotary mechanism of the central stalk subunits to proton translocation. Its function is as follows. Component of the F(0) channel, it forms part of the peripheral stalk, linking F(1) to F(0). The chain is ATP synthase subunit b from Streptococcus suis (strain 98HAH33).